The following is a 512-amino-acid chain: MEEFKGYLQKGGFKQQHFLYPLLFQEYIYALAHDQGLNVNASTFNEPPEISGYGNKYSSLLVKRLITRIYQQNSFIYSVNNSKQNRFVGHNKNFYYKMISEGFAIVVEIPFSLRLVSSLKEKKEITKSQNLRSIHSLFPFLEDKFSHLNYVSDILIPYPVHLEILVQILQCWIQDLPTLHLLRLIFHDYHNGSNSIPPNKSSFGFSKDNPRLYRFLYNSYVVECESIFDFLRKSSSYLRSTSFGPLLERTHFYGKMKHIGVTCCNDFQKTLWLFKDPFMHYVRYQGKCIMASKGTHLLMKKWKSYFVNLWQCHFHFWSQPSRIHINQFPHFSFYLLGYLSSVPINPSSAKSQMLENSFLIDSFTPKFETMISIIPMIGSLAKAKFCNLSGNPISKPAWADLSDSDIIDRFGRIYRNLSHYYSGSSKKQSLYRIKYILRLSCARTLARKHKSTVRAFLQRLGSEFFEEFFMEQEKVLSLILPRTSYPLHQLSREPIWYLDIIRINDLVNHFDL.

It belongs to the intron maturase 2 family. MatK subfamily.

It is found in the plastid. Its subcellular location is the chloroplast. Usually encoded in the trnK tRNA gene intron. Probably assists in splicing its own and other chloroplast group II introns. This Lemna minor (Common duckweed) protein is Maturase K.